The primary structure comprises 330 residues: MKKRLSLDRRFLPYIKKAGGVLVKKQMGAYVSLAAAMAIVGSSVVVGKLMVERIPVFLSSGLRFLIASVVLLMLLFCIEKGFPALTKKDVFVLLVQSFTGVFLFSICLLYGVQYTTGTESGILTSTTPMLIGILSFFLLREKIEKKTLIGILLAVCGVMAINLFGAGSQDGTPHALFGNMLIIAAVIGEALFTLMAKLLSPHISALAISTFVSLFGFLFFLPFALFEASSFDYSVPTVLDWSYVLYYALFVTVLAFYLWYSGVTKVPAGVSGIFTSVLPVSAVILSGVILKEPFEFVHFIGIACVIGGIFVTVIKKKQPDAYPAAEEKTL.

The next 10 membrane-spanning stretches (helical) occupy residues 27–47 (MGAY…VVVG), 56–76 (VFLS…MLLF), 90–110 (VFVL…CLLY), 119–139 (ESGI…FFLL), 147–167 (TLIG…FGAG), 176–196 (LFGN…TLMA), 206–226 (LAIS…FALF), 243–263 (YVLY…YSGV), 270–290 (VSGI…GVIL), and 294–314 (FEFV…VTVI). EamA domains follow at residues 38-163 (AIVG…AINL) and 187-314 (IGEA…VTVI).

Belongs to the EamA transporter family.

It is found in the cell membrane. This is an uncharacterized protein from Bacillus subtilis (strain 168).